A 716-amino-acid polypeptide reads, in one-letter code: Fatty acid oxidation complex subunit alpha (716 aa).

The segment at 1 to 189 (MIYQSPTIQV…KVGAVDAVVA (189 aa)) is enoyl-CoA hydratase/isomerase. Position 296 (aspartate 296) interacts with substrate. The tract at residues 311–716 (KEVNNAAVLG…AANNGSYYQA (406 aa)) is 3-hydroxyacyl-CoA dehydrogenase. NAD(+)-binding positions include methionine 324, aspartate 343, 400–402 (VVE), lysine 407, and serine 429. Histidine 450 serves as the catalytic For 3-hydroxyacyl-CoA dehydrogenase activity. Asparagine 453 contacts NAD(+). Substrate is bound by residues asparagine 500 and tyrosine 660.

This sequence in the N-terminal section; belongs to the enoyl-CoA hydratase/isomerase family. In the C-terminal section; belongs to the 3-hydroxyacyl-CoA dehydrogenase family. In terms of assembly, heterotetramer of two alpha chains (FadB) and two beta chains (FadA).

The catalysed reaction is a (3S)-3-hydroxyacyl-CoA + NAD(+) = a 3-oxoacyl-CoA + NADH + H(+). It catalyses the reaction a (3S)-3-hydroxyacyl-CoA = a (2E)-enoyl-CoA + H2O. The enzyme catalyses a 4-saturated-(3S)-3-hydroxyacyl-CoA = a (3E)-enoyl-CoA + H2O. It carries out the reaction (3S)-3-hydroxybutanoyl-CoA = (3R)-3-hydroxybutanoyl-CoA. The catalysed reaction is a (3Z)-enoyl-CoA = a 4-saturated (2E)-enoyl-CoA. It catalyses the reaction a (3E)-enoyl-CoA = a 4-saturated (2E)-enoyl-CoA. Its pathway is lipid metabolism; fatty acid beta-oxidation. In terms of biological role, involved in the aerobic and anaerobic degradation of long-chain fatty acids via beta-oxidation cycle. Catalyzes the formation of 3-oxoacyl-CoA from enoyl-CoA via L-3-hydroxyacyl-CoA. It can also use D-3-hydroxyacyl-CoA and cis-3-enoyl-CoA as substrate. The protein is Fatty acid oxidation complex subunit alpha of Shewanella baltica (strain OS223).